The sequence spans 294 residues: DNA adenine methyltransferase YhdJ (294 aa).

The interval 275–294 (TGNLSKRSRLSEVDPDLITK) is disordered. Residues 283–294 (RLSEVDPDLITK) show a composition bias toward basic and acidic residues.

This sequence belongs to the N(4)/N(6)-methyltransferase family.

It catalyses the reaction a 2'-deoxyadenosine in DNA + S-adenosyl-L-methionine = an N(6)-methyl-2'-deoxyadenosine in DNA + S-adenosyl-L-homocysteine + H(+). In terms of biological role, a beta subtype methylase, recognizes the double-stranded sequence 5'-ATGCAT-3' and methylates A-5. In Escherichia coli (strain K12), this protein is DNA adenine methyltransferase YhdJ (yhdJ).